The following is a 39-amino-acid chain: Cytochrome b559 subunit beta (39 aa).

The helical transmembrane segment at 14 to 30 (WLAIHGLAVPTVFFLGS) threads the bilayer. H18 contacts heme.

Belongs to the PsbE/PsbF family. Heterodimer of an alpha subunit and a beta subunit. PSII is composed of 1 copy each of membrane proteins PsbA, PsbB, PsbC, PsbD, PsbE, PsbF, PsbH, PsbI, PsbJ, PsbK, PsbL, PsbM, PsbT, PsbX, PsbY, PsbZ, Psb30/Ycf12, at least 3 peripheral proteins of the oxygen-evolving complex and a large number of cofactors. It forms dimeric complexes. Heme b serves as cofactor.

The protein localises to the plastid. Its subcellular location is the chloroplast thylakoid membrane. This b-type cytochrome is tightly associated with the reaction center of photosystem II (PSII). PSII is a light-driven water:plastoquinone oxidoreductase that uses light energy to abstract electrons from H(2)O, generating O(2) and a proton gradient subsequently used for ATP formation. It consists of a core antenna complex that captures photons, and an electron transfer chain that converts photonic excitation into a charge separation. This is Cytochrome b559 subunit beta from Ephedra sinica (Chinese ephedra).